Here is a 204-residue protein sequence, read N- to C-terminus: Protein GrpE (204 aa).

A compositionally biased stretch (basic and acidic residues) spans 1–12 (MSNEEQAQKDDA). The tract at residues 1-32 (MSNEEQAQKDDAQPVNEAAIDATAEQADAEVE) is disordered. Over residues 17 to 26 (EAAIDATAEQ) the composition is skewed to low complexity.

This sequence belongs to the GrpE family. Homodimer.

The protein resides in the cytoplasm. Functionally, participates actively in the response to hyperosmotic and heat shock by preventing the aggregation of stress-denatured proteins, in association with DnaK and GrpE. It is the nucleotide exchange factor for DnaK and may function as a thermosensor. Unfolded proteins bind initially to DnaJ; upon interaction with the DnaJ-bound protein, DnaK hydrolyzes its bound ATP, resulting in the formation of a stable complex. GrpE releases ADP from DnaK; ATP binding to DnaK triggers the release of the substrate protein, thus completing the reaction cycle. Several rounds of ATP-dependent interactions between DnaJ, DnaK and GrpE are required for fully efficient folding. In Pseudoalteromonas atlantica (strain T6c / ATCC BAA-1087), this protein is Protein GrpE.